The chain runs to 268 residues: Putative sgc region protein SgcQ (268 aa).

Belongs to the BtpA family.

This chain is Putative sgc region protein SgcQ (sgcQ), found in Escherichia coli (strain K12).